We begin with the raw amino-acid sequence, 380 residues long: Epoxyqueuosine reductase (380 aa).

The Proton donor role is filled by aspartate 134. A 4Fe-4S ferredoxin-type 1 domain is found at 178-208 (FPPDKPIEDQCGGCTKCIDICPTGALIQGGQ). [4Fe-4S] cluster is bound by residues cysteine 188, cysteine 191, cysteine 194, cysteine 198, cysteine 214, cysteine 240, cysteine 243, and cysteine 247. One can recognise a 4Fe-4S ferredoxin-type 2 domain in the interval 226–258 (PEEYRDKIGNRIYGCDTCQTVCPKNKGMDFHNH).

It belongs to the QueG family. In terms of assembly, monomer. Cob(II)alamin is required as a cofactor. The cofactor is [4Fe-4S] cluster.

It is found in the cytoplasm. The catalysed reaction is epoxyqueuosine(34) in tRNA + AH2 = queuosine(34) in tRNA + A + H2O. The protein operates within tRNA modification; tRNA-queuosine biosynthesis. Catalyzes the conversion of epoxyqueuosine (oQ) to queuosine (Q), which is a hypermodified base found in the wobble positions of tRNA(Asp), tRNA(Asn), tRNA(His) and tRNA(Tyr). The chain is Epoxyqueuosine reductase from Bacillus cereus (strain ATCC 14579 / DSM 31 / CCUG 7414 / JCM 2152 / NBRC 15305 / NCIMB 9373 / NCTC 2599 / NRRL B-3711).